We begin with the raw amino-acid sequence, 289 residues long: Splicing factor C9orf78 homolog (289 aa).

Positions 1–12 (MPVVRKIFRRRR) are enriched in basic residues. Disordered regions lie at residues 1–27 (MPVVRKIFRRRRGDSESEEDEQDSEEV) and 86–109 (GKDKISEEEDLHLGTSFSAETNRR). Residues 5-58 (RKIFRRRRGDSESEEDEQDSEEVRLKLEETREVQNLRKRPNGVSAVALLVGEKV) are interaction with SNRNP200. Phosphoserine occurs at positions 15 and 17. Tyr-147 bears the Phosphotyrosine mark. Basic and acidic residues predominate over residues 232–283 (LNAPIRRNKEEPKARPLRVGDTEKPEPERSPPNRKRPANEKATDDYHYEKFK). A disordered region spans residues 232–289 (LNAPIRRNKEEPKARPLRVGDTEKPEPERSPPNRKRPANEKATDDYHYEKFKKMNRRY). A Phosphothreonine modification is found at Thr-253. Ser-261 is subject to Phosphoserine.

The protein belongs to the TLS1 family. Component of the spliceosome. Interacts with SNRNP200; the interaction is direct. Interacts with PRPF8.

Its subcellular location is the nucleus. The protein resides in the chromosome. It is found in the centromere. Plays a role in pre-mRNA splicing by promoting usage of the upstream 3'-splice site at alternative NAGNAG splice sites; these are sites featuring alternative acceptor motifs separated by only a few nucleotides. May also modulate exon inclusion events. Plays a role in spliceosomal remodeling by displacing WBP4 from SNRNP200 and may act to inhibit SNRNP200 helicase activity. Binds U5 snRNA. Required for proper chromosome segregation. Not required for splicing of shelterin components. This is Splicing factor C9orf78 homolog from Pongo abelii (Sumatran orangutan).